The primary structure comprises 406 residues: RNA exonuclease 4 (406 aa).

Residues 1–10 (MAPELSSNWK) show a composition bias toward polar residues. 2 disordered regions span residues 1–108 (MAPE…TLPS) and 156–181 (AGLT…PTDL). 3 stretches are compositionally biased toward low complexity: residues 54-64 (SQQQQQASNPS), 72-82 (SQTQSQPSSQK), and 94-108 (SKPT…TLPS). Over residues 162 to 173 (GHSSSSPKSNKN) the composition is skewed to polar residues. In terms of domain architecture, Exonuclease spans 216 to 367 (YLSIDCEMVG…EDARVAMLLF (152 aa)). Residues 377–387 (ENSNRYEEGQA) are compositionally biased toward basic and acidic residues. Residues 377–406 (ENSNRYEEGQAKKGGNGGGGGGGKKKKGKK) are disordered. Over residues 388 to 398 (KKGGNGGGGGG) the composition is skewed to gly residues.

It belongs to the REXO4 family.

The protein localises to the nucleus. In terms of biological role, exoribonuclease involved in ribosome biosynthesis. Involved in the processing of ITS1, the internal transcribed spacer localized between the 18S and 5.8S rRNAs. This Neurospora crassa (strain ATCC 24698 / 74-OR23-1A / CBS 708.71 / DSM 1257 / FGSC 987) protein is RNA exonuclease 4 (rex-4).